The chain runs to 238 residues: Probable metal transport system ATP-binding protein TP_0035 (238 aa).

Positions 10–231 (VLLQNVSFRY…LDMQKKDALA (222 aa)) constitute an ABC transporter domain. 44–51 (GENGSGKS) contributes to the ATP binding site.

This sequence belongs to the ABC transporter superfamily.

It is found in the cell inner membrane. Its function is as follows. Part of an ATP-driven transport system TP_0034/TP_0035/TP_0036 for a metal. Probably responsible for energy coupling to the transport system. The polypeptide is Probable metal transport system ATP-binding protein TP_0035 (Treponema pallidum (strain Nichols)).